Consider the following 104-residue polypeptide: Thioredoxin (104 aa).

One can recognise a Thioredoxin domain in the interval 2–104 (AIVKVTDSNF…NLAEVIEKHL (103 aa)). Cysteine 29 and cysteine 32 are disulfide-bonded.

Belongs to the thioredoxin family.

In terms of biological role, component of the thioredoxin-thioredoxin reductase system. Participates in various redox reactions through the reversible oxidation of its active center dithiol to a disulfide and catalyzes dithiol-disulfide exchange reactions. This chain is Thioredoxin (trxA), found in Staphylococcus saprophyticus subsp. saprophyticus (strain ATCC 15305 / DSM 20229 / NCIMB 8711 / NCTC 7292 / S-41).